The sequence spans 456 residues: ATP synthase subunit beta 1 (456 aa).

152–159 (GGAGVGKS) contributes to the ATP binding site.

It belongs to the ATPase alpha/beta chains family. F-type ATPases have 2 components, CF(1) - the catalytic core - and CF(0) - the membrane proton channel. CF(1) has five subunits: alpha(3), beta(3), gamma(1), delta(1), epsilon(1). CF(0) has three main subunits: a(1), b(2) and c(9-12). The alpha and beta chains form an alternating ring which encloses part of the gamma chain. CF(1) is attached to CF(0) by a central stalk formed by the gamma and epsilon chains, while a peripheral stalk is formed by the delta and b chains.

The protein resides in the cell membrane. The catalysed reaction is ATP + H2O + 4 H(+)(in) = ADP + phosphate + 5 H(+)(out). Produces ATP from ADP in the presence of a proton gradient across the membrane. The catalytic sites are hosted primarily by the beta subunits. This is ATP synthase subunit beta 1 from Listeria monocytogenes serotype 4b (strain F2365).